Consider the following 363-residue polypeptide: Outer membrane protein P2 (363 aa).

A signal peptide spans 1–20 (MKKTLAALIVGAFAASAANA).

Belongs to the Gram-negative porin family. As to quaternary structure, homotrimer.

It localises to the cell outer membrane. In terms of biological role, forms pores that allow passive diffusion of small molecules across the outer membrane. This chain is Outer membrane protein P2 (ompP2), found in Haemophilus influenzae.